Reading from the N-terminus, the 144-residue chain is Bradykinin-potentiating and C-type natriuretic peptides isoform 2 (144 aa).

The signal sequence occupies residues 1–23 (MVLSRLAASGLLLLALLALSVDG). Residues 24-30 (KPVQQWA) constitute a propeptide that is removed on maturation. Gln31 is modified (pyrrolidone carboxylic acid). The propeptide occupies 41–47 (LLVQQWA). Gln48 bears the Pyrrolidone carboxylic acid mark. Positions 61-67 (LTVQQWA) are excised as a propeptide. Residue Gln68 is modified to Pyrrolidone carboxylic acid. The propeptide occupies 78 to 84 (LTVQQWA). A disordered region spans residues 81–110 (QQWAQGRPPGPPIPPLTVQQWAQARPPHPP). Gln85 carries the post-translational modification Pyrrolidone carboxylic acid. Positions 96-102 (LTVQQWA) are excised as a propeptide. Gln103 carries the pyrrolidone carboxylic acid modification. Positions 114 to 116 (APL) are excised as a propeptide. Position 117 is a pyrrolidone carboxylic acid (Gln117). Residue Val122 is a propeptide. Gln123 carries the post-translational modification Pyrrolidone carboxylic acid. A propeptide spanning residues 128–144 (VQKWAPVQKWAPLLQPT) is cleaved from the precursor.

This sequence in the N-terminal section; belongs to the bradykinin-potentiating peptide family. In terms of tissue distribution, expressed by venom gland.

It localises to the secreted. It is found in the cytoplasm. The protein resides in the cytosol. Its function is as follows. Peptide with several activities. It inhibits the activity of the angiotensin-converting enzyme (ACE) by a preferential interaction with its C-domain. It evokes transient hypotension (-14 mmHg) similar to that evoked by 0.5 ug of bradykinin, when injected alone into rats. It has a high bradykinin-potentiating effect (120%), when 60 nmol of BPP-10c are coinjected with 0.5 ug of bradykinin into rats. Does not affect angiotensin-1 pressor effects. Shows potent and long-lasting antihypertensive activity as well as a reduction of the heart rate. It also binds and dose-dependently promotes the activation of cytosolic argininosuccinate synthase (ASS1), an enzyme that catalyzes the conversion of citrulline, L-aspartate and ATP to argininosuccinate, AMP and pyrophosphate. It also enhances ASS1-dependent arginine production in HEK 293 cells, as well as in spontaneous hypertensive rat (SHR) and Wistar rat plasma. In addition, it induces the production of nitric-oxide (NO) by HUVEC cells via the endothelial nitric-oxide synthase (NOS3), which use arginine as a substrate and produce NO. It has been shown to be internalized by ASS1-expressing endothelial (HUVEC) and kidney (HEK 293) cells, and is detected homogenously distributed within the cell cytoplasm for up to 2 hours. Acts as indirect hypotensive agent. Increases leukocyte rolling flux and adhesion by five-fold in post-capillary venules, without any increments in vasodilation of arterioles. In terms of biological role, acts as indirect hypotensive agent. Potently induces vasodilation of arterioles, with only a small increase in leukocyte rolling flux. The polypeptide is Bradykinin-potentiating and C-type natriuretic peptides isoform 2 (Bothrops jararacussu (Jararacussu)).